We begin with the raw amino-acid sequence, 564 residues long: Dihydroxy-acid dehydratase (564 aa).

C53 serves as a coordination point for [2Fe-2S] cluster. Mg(2+) is bound at residue D85. Residue C126 participates in [2Fe-2S] cluster binding. The Mg(2+) site is built by D127 and K128. K128 is subject to N6-carboxylysine. C203 contacts [2Fe-2S] cluster. E454 contributes to the Mg(2+) binding site. The Proton acceptor role is filled by S480.

The protein belongs to the IlvD/Edd family. In terms of assembly, homodimer. [2Fe-2S] cluster is required as a cofactor. Mg(2+) serves as cofactor.

It catalyses the reaction (2R)-2,3-dihydroxy-3-methylbutanoate = 3-methyl-2-oxobutanoate + H2O. The enzyme catalyses (2R,3R)-2,3-dihydroxy-3-methylpentanoate = (S)-3-methyl-2-oxopentanoate + H2O. Its pathway is amino-acid biosynthesis; L-isoleucine biosynthesis; L-isoleucine from 2-oxobutanoate: step 3/4. The protein operates within amino-acid biosynthesis; L-valine biosynthesis; L-valine from pyruvate: step 3/4. Functionally, functions in the biosynthesis of branched-chain amino acids. Catalyzes the dehydration of (2R,3R)-2,3-dihydroxy-3-methylpentanoate (2,3-dihydroxy-3-methylvalerate) into 2-oxo-3-methylpentanoate (2-oxo-3-methylvalerate) and of (2R)-2,3-dihydroxy-3-methylbutanoate (2,3-dihydroxyisovalerate) into 2-oxo-3-methylbutanoate (2-oxoisovalerate), the penultimate precursor to L-isoleucine and L-valine, respectively. The chain is Dihydroxy-acid dehydratase from Leifsonia xyli subsp. xyli (strain CTCB07).